Here is a 280-residue protein sequence, read N- to C-terminus: MVRLDLADVVLRRMQEKDIEAVKALIKEGCEGTENRLILHLLTRPLALLLLAILSSILRCVLHSFVLALVIPVFISVIYLKLTIPRSAGILGSCRPYWDYIGSSYHADTEPDLPNPHLGRAKLTTNQEKTRRRKKAKEKEKMNESEQVDEDELKQRAKVAGEVWVADSDGEIVGCVARDGWSRDGVCRVCRLVVQCWYRREGLGRLLVQGLESRTKQKGVCRVYAHVPIPSKVGEAFFRRLGYRLQGETAGIEEEEEDDYEDPEKGWLGYPLTKVFVKDL.

The next 2 helical transmembrane spans lie at 37–57 (LILH…LSSI) and 60–80 (CVLH…VIYL). Residues 111-152 (PDLPNPHLGRAKLTTNQEKTRRRKKAKEKEKMNESEQVDEDE) form a disordered region. The N-acetyltransferase domain occupies 116–273 (PHLGRAKLTT…EKGWLGYPLT (158 aa)).

Belongs to the camello family.

It is found in the membrane. Probable acetyltransferase. This Danio rerio (Zebrafish) protein is Probable N-acetyltransferase 14 (nat14).